The primary structure comprises 1038 residues: Elongation factor 3 (1038 aa).

6 HEAT repeats span residues 93–131, 133–170, 174–211, 213–249, 255–287, and 292–331; these read EAYL…SANK, STIR…VAPY, RCLP…VVGN, DIEP…TVEA, MEPL…LMDD, and QLFI…AGGS. ADP is bound at residue E406. ABC transporter domains follow at residues 426-654 and 680-995; these read IFIE…YYEL and IRLT…EEVT. Residues N716, E924, N927, and H953 each contribute to the ADP site. The interval 1012–1038 is disordered; the sequence is RKEKKAKDKARKEAEARGEYYSDSDEE. The span at 1021 to 1031 shows a compositional bias: basic and acidic residues; the sequence is ARKEAEARGEY.

Belongs to the ABC transporter superfamily. ABCF family. EF3 subfamily. In terms of assembly, monomer.

It is found in the cytoplasm. It carries out the reaction ATP + H2O = ADP + phosphate + H(+). It functions in the pathway protein biosynthesis; polypeptide chain elongation. Ribosome-dependent ATPase that functions in cytoplasmic translation elongation. Required for the ATP-dependent release of deacylated tRNA from the ribosomal E-site during protein biosynthesis. Stimulates the eEF1A-dependent binding of aminoacyl-tRNA to the ribosomal A-site, which has reduced affinity for tRNA as long as the E-site is occupied. Assists translation termination by stimulating the release of nascent protein from the ribosome by release factors. The sequence is that of Elongation factor 3 from Phytophthora infestans (strain T30-4) (Potato late blight agent).